The chain runs to 142 residues: Hemoglobin subunit alpha (142 aa).

The 141-residue stretch at 2 to 142 (VLSDADKTHV…VATVLTSKYR (141 aa)) folds into the Globin domain. The residue at position 4 (serine 4) is a Phosphoserine. Position 8 is an N6-succinyllysine (lysine 8). Threonine 9 bears the Phosphothreonine mark. Lysine 12 bears the N6-succinyllysine mark. Lysine 17 is modified (N6-acetyllysine; alternate). Lysine 17 is modified (N6-succinyllysine; alternate). Position 25 is a phosphotyrosine (tyrosine 25). At serine 36 the chain carries Phosphoserine. Residue lysine 41 is modified to N6-succinyllysine. Serine 50 is modified (phosphoserine). Histidine 59 is a binding site for O2. Histidine 88 is a heme b binding site. Serine 103 carries the phosphoserine modification. Threonine 109 carries the post-translational modification Phosphothreonine. Serine 125 and serine 132 each carry phosphoserine. Phosphothreonine occurs at positions 135 and 138. Serine 139 bears the Phosphoserine mark.

This sequence belongs to the globin family. Heterotetramer of two alpha chains and two beta chains. Red blood cells.

Involved in oxygen transport from the lung to the various peripheral tissues. In terms of biological role, hemopressin acts as an antagonist peptide of the cannabinoid receptor CNR1. Hemopressin-binding efficiently blocks cannabinoid receptor CNR1 and subsequent signaling. In Dasyurus viverrinus (Eastern quoll), this protein is Hemoglobin subunit alpha (HBA).